The primary structure comprises 72 residues: Translation initiation factor IF-1 (72 aa).

Positions 1–72 (MAKDDVIEVE…TRGRITYRYK (72 aa)) constitute an S1-like domain. Phosphotyrosine is present on Tyr60.

This sequence belongs to the IF-1 family. In terms of assembly, component of the 30S ribosomal translation pre-initiation complex which assembles on the 30S ribosome in the order IF-2 and IF-3, IF-1 and N-formylmethionyl-tRNA(fMet); mRNA recruitment can occur at any time during PIC assembly.

Its subcellular location is the cytoplasm. Its function is as follows. One of the essential components for the initiation of protein synthesis. Stabilizes the binding of IF-2 and IF-3 on the 30S subunit to which N-formylmethionyl-tRNA(fMet) subsequently binds. Helps modulate mRNA selection, yielding the 30S pre-initiation complex (PIC). Upon addition of the 50S ribosomal subunit IF-1, IF-2 and IF-3 are released leaving the mature 70S translation initiation complex. The polypeptide is Translation initiation factor IF-1 (Bacillus pumilus (strain SAFR-032)).